The primary structure comprises 347 residues: tRNA N6-adenosine threonylcarbamoyltransferase (347 aa).

Fe cation-binding residues include His-113 and His-117. Substrate contacts are provided by residues 136 to 140 (IVSGG), Asp-170, Gly-183, Asp-187, and Asn-282. Fe cation is bound at residue Asp-310.

Belongs to the KAE1 / TsaD family. Requires Fe(2+) as cofactor.

The protein localises to the cytoplasm. The catalysed reaction is L-threonylcarbamoyladenylate + adenosine(37) in tRNA = N(6)-L-threonylcarbamoyladenosine(37) in tRNA + AMP + H(+). Its function is as follows. Required for the formation of a threonylcarbamoyl group on adenosine at position 37 (t(6)A37) in tRNAs that read codons beginning with adenine. Is involved in the transfer of the threonylcarbamoyl moiety of threonylcarbamoyl-AMP (TC-AMP) to the N6 group of A37, together with TsaE and TsaB. TsaD likely plays a direct catalytic role in this reaction. The sequence is that of tRNA N6-adenosine threonylcarbamoyltransferase from Bifidobacterium adolescentis (strain ATCC 15703 / DSM 20083 / NCTC 11814 / E194a).